The sequence spans 492 residues: Monocarboxylate transporter 3 (492 aa).

At methionine 1–aspartate 14 the chain is on the cytoplasmic side. Residues glycine 15–phenylalanine 35 traverse the membrane as a helical segment. Over proline 36–alanine 58 the chain is Extracellular. The helical transmembrane segment at tryptophan 59–valine 79 threads the bilayer. Residues threonine 80–arginine 85 are Cytoplasmic-facing. The helical transmembrane segment at proline 86–serine 106 threads the bilayer. Topologically, residues arginine 107–alanine 115 are extracellular. A helical membrane pass occupies residues glycine 116–leucine 136. At tyrosine 137–asparagine 146 the chain is on the cytoplasmic side. The chain crosses the membrane as a helical span at residues glycine 147 to leucine 167. Residues glycine 168–glycine 172 lie on the Extracellular side of the membrane. The chain crosses the membrane as a helical span at residues tryptophan 173–valine 193. At methionine 194 to alanine 228 the chain is on the cytoplasmic side. The chain crosses the membrane as a helical span at residues phenylalanine 229 to leucine 249. Residues leucine 250–alanine 257 are Extracellular-facing. A helical membrane pass occupies residues glycine 258–alanine 278. At arginine 279 to proline 293 the chain is on the cytoplasmic side. The chain crosses the membrane as a helical span at residues histidine 294–alanine 314. Over arginine 315–serine 318 the chain is Extracellular. Residues tyrosine 319–leucine 339 traverse the membrane as a helical segment. Residues glutamine 340–arginine 352 are Cytoplasmic-facing. Residues phenylalanine 353–proline 373 traverse the membrane as a helical segment. Residues serine 374–glutamate 386 are Extracellular-facing. A helical membrane pass occupies residues isoleucine 387–threonine 407. Over tyrosine 408–alanine 492 the chain is Cytoplasmic. Residues serine 419–alanine 492 form a disordered region. Basolateral sorting signal stretches follow at residues glycine 426–proline 460 and arginine 461–isoleucine 482. Residues glutamate 476–alanine 492 show a composition bias toward basic and acidic residues.

It belongs to the major facilitator superfamily. Monocarboxylate porter (TC 2.A.1.13) family. Expressed exclusively in retinal pigment epithelium and choroid plexus epithelium.

Its subcellular location is the basolateral cell membrane. The enzyme catalyses (S)-lactate(in) + H(+)(in) = (S)-lactate(out) + H(+)(out). Its function is as follows. Probable retinal pigment epithelium (RPE)-specific proton-coupled L-lactate transporter. May facilitate transport of lactate and H(+) out of the retina and could therefore play an essential role in maintenance of metabolic and ionic homeostasis of the outer retina. This chain is Monocarboxylate transporter 3 (Slc16a8), found in Mus musculus (Mouse).